The primary structure comprises 701 residues: MNPVIKKFQFGQSTVTLETGRIARQASGAVLVTVDDDVSVLVTVVGAKTADPSKGFFPLSVHYQEKTYAAGKIPGGFFKREARPSEKETLTSRLIDRPIRPLFPEGFQNEVQVICTVVSTSKKTDPDIAAMIGTSAALAVSGIPFDGPIGAARVAFHPETGYLLNPNYEQLKASSLDMVVAGTKDAVLMVESEAKELTEDQMLGAVLFAHDEFQAVIKAVEELAAEAGKPRWDWTAPQANTALLDAIRSEFGAAISEAYTITIKQQRYARLDELREQVVAKFSGEEGQPSGGEVKDAFGEIEYRTVRENIVNGKPRIDGRDTRTVRPLAIEVGVLDKTHGSALFTRGETQALVVATLGTARDAQLLDTLEGEKKDAFMLHYNFPPYSVGECGRMGATGRREIGHGRLARRGVAAMLPSADEFPYTIRVVSEITESNGSSSMASVCGASLALMDAGVPMKAPVAGIAMGLVKEGEKFAVLTDILGDEDHLGDMDFKVAGTAKGVTALQMDIKIQGITEEIMEIALGQALEARLNILGQMSQVIAQSRSELSANAPTMLAMKIDQDKIRDVIGKGGATIRAICEETKASIDIEDDGSIKIFGETKEAAEAAKQRVLSITAEAEIGKIYVGKVERIVDFGAFVNILPGKDGLVHISQISDQRIEKVTDVLKEGQEVKVLVLDVDNRGRIKLSIKDVAAAEASGV.

D487 and D493 together coordinate Mg(2+). Positions 554-613 constitute a KH domain; that stretch reads PTMLAMKIDQDKIRDVIGKGGATIRAICEETKASIDIEDDGSIKIFGETKEAAEAAKQRV. Residues 623-691 form the S1 motif domain; sequence GKIYVGKVER…NRGRIKLSIK (69 aa).

Belongs to the polyribonucleotide nucleotidyltransferase family. Component of the RNA degradosome, which is a multiprotein complex involved in RNA processing and mRNA degradation. Requires Mg(2+) as cofactor.

Its subcellular location is the cytoplasm. It carries out the reaction RNA(n+1) + phosphate = RNA(n) + a ribonucleoside 5'-diphosphate. Functionally, involved in mRNA degradation. Catalyzes the phosphorolysis of single-stranded polyribonucleotides processively in the 3'- to 5'-direction. The sequence is that of Polyribonucleotide nucleotidyltransferase from Stutzerimonas stutzeri (strain A1501) (Pseudomonas stutzeri).